We begin with the raw amino-acid sequence, 420 residues long: Serine--tRNA ligase (420 aa).

L-serine is bound at residue 229–231 (TAE). 260–262 (RSE) lines the ATP pocket. Glu-283 serves as a coordination point for L-serine. 347–350 (EISS) is a binding site for ATP. Residue Ser-381 coordinates L-serine.

It belongs to the class-II aminoacyl-tRNA synthetase family. Type-1 seryl-tRNA synthetase subfamily. As to quaternary structure, homodimer. The tRNA molecule binds across the dimer.

The protein localises to the cytoplasm. The catalysed reaction is tRNA(Ser) + L-serine + ATP = L-seryl-tRNA(Ser) + AMP + diphosphate + H(+). It carries out the reaction tRNA(Sec) + L-serine + ATP = L-seryl-tRNA(Sec) + AMP + diphosphate + H(+). The protein operates within aminoacyl-tRNA biosynthesis; selenocysteinyl-tRNA(Sec) biosynthesis; L-seryl-tRNA(Sec) from L-serine and tRNA(Sec): step 1/1. Functionally, catalyzes the attachment of serine to tRNA(Ser). Is also able to aminoacylate tRNA(Sec) with serine, to form the misacylated tRNA L-seryl-tRNA(Sec), which will be further converted into selenocysteinyl-tRNA(Sec). The chain is Serine--tRNA ligase from Gluconobacter oxydans (strain 621H) (Gluconobacter suboxydans).